A 348-amino-acid polypeptide reads, in one-letter code: Type IV methyl-directed restriction enzyme EcoKMcrBC (348 aa).

Modifies the specificity of McrB restriction by expanding the range of modified sequences restricted. Does not bind to DNA. The protein is Type IV methyl-directed restriction enzyme EcoKMcrBC (mcrC) of Escherichia coli (strain K12).